Here is a 558-residue protein sequence, read N- to C-terminus: Putative transport protein VC0395_A0715/VC395_1212 (558 aa).

5 consecutive transmembrane segments (helical) span residues 5–25 (VVLL…AIGL), 37–57 (LGNS…GFSF), 66–86 (FMLF…GIFF), 92–112 (YLIL…FGGY), and 164–184 (VGYA…AKLL). RCK C-terminal domains lie at 203–290 (RGLG…FRNG) and 291–374 (KEVF…KIGF). The next 6 helical transmembrane spans lie at 384 to 404 (LLAF…TMTF), 407 to 427 (VSFS…LGFL), 441 to 461 (ALNM…GLNA), 476 to 496 (VIGL…LVGA), 504 to 524 (ALLF…DVVN), and 537 to 557 (AGTY…FILL).

This sequence belongs to the AAE transporter (TC 2.A.81) family. YbjL subfamily.

The protein localises to the cell membrane. The chain is Putative transport protein VC0395_A0715/VC395_1212 from Vibrio cholerae serotype O1 (strain ATCC 39541 / Classical Ogawa 395 / O395).